We begin with the raw amino-acid sequence, 146 residues long: Hemoglobin subunit beta (146 aa).

The Globin domain maps to 2–146 (QWTAEEKQLI…VAHALARKYH (145 aa)). Heme b contacts are provided by His-63 and His-92.

This sequence belongs to the globin family. In terms of assembly, heterotetramer of two alpha chains and two beta chains. In terms of tissue distribution, red blood cells.

Its function is as follows. Involved in oxygen transport from the lung to the various peripheral tissues. The chain is Hemoglobin subunit beta (HBB) from Turdus merula (Common blackbird).